The following is a 436-amino-acid chain: Glutamyl-tRNA reductase (436 aa).

Substrate-binding positions include 52 to 55 (TCHR), S105, 110 to 112 (EDQ), and Q116. Residue C53 is the Nucleophile of the active site. 184–189 (GAGEMG) serves as a coordination point for NADP(+).

It belongs to the glutamyl-tRNA reductase family. In terms of assembly, homodimer.

The enzyme catalyses (S)-4-amino-5-oxopentanoate + tRNA(Glu) + NADP(+) = L-glutamyl-tRNA(Glu) + NADPH + H(+). It functions in the pathway porphyrin-containing compound metabolism; protoporphyrin-IX biosynthesis; 5-aminolevulinate from L-glutamyl-tRNA(Glu): step 1/2. Catalyzes the NADPH-dependent reduction of glutamyl-tRNA(Glu) to glutamate 1-semialdehyde (GSA). This Halobacterium salinarum (strain ATCC 29341 / DSM 671 / R1) protein is Glutamyl-tRNA reductase.